The chain runs to 265 residues: Mlc titration factor A (265 aa).

Residues His111, His148, His152, and Glu211 each contribute to the Zn(2+) site.

This sequence belongs to the MtfA family. As to quaternary structure, interacts with Mlc. Zn(2+) is required as a cofactor.

It is found in the cytoplasm. In terms of biological role, involved in the modulation of the activity of the glucose-phosphotransferase system (glucose-PTS). Interacts with the transcriptional repressor Mlc, preventing its interaction with DNA and leading to the modulation of expression of genes regulated by Mlc, including ptsG, which encodes the PTS system glucose-specific EIICB component. Functionally, shows zinc-dependent metallopeptidase activity. The chain is Mlc titration factor A from Shigella dysenteriae serotype 1 (strain Sd197).